A 462-amino-acid chain; its full sequence is L-seryl-tRNA(Sec) selenium transferase (462 aa).

Lys292 bears the N6-(pyridoxal phosphate)lysine mark.

The protein belongs to the SelA family. Pyridoxal 5'-phosphate serves as cofactor.

The protein resides in the cytoplasm. It catalyses the reaction L-seryl-tRNA(Sec) + selenophosphate + H(+) = L-selenocysteinyl-tRNA(Sec) + phosphate. It participates in aminoacyl-tRNA biosynthesis; selenocysteinyl-tRNA(Sec) biosynthesis; selenocysteinyl-tRNA(Sec) from L-seryl-tRNA(Sec) (bacterial route): step 1/1. Its function is as follows. Converts seryl-tRNA(Sec) to selenocysteinyl-tRNA(Sec) required for selenoprotein biosynthesis. This chain is L-seryl-tRNA(Sec) selenium transferase, found in Geotalea uraniireducens (strain Rf4) (Geobacter uraniireducens).